The sequence spans 433 residues: Cysteine--tRNA ligase (433 aa).

Cysteine 4 serves as a coordination point for Zn(2+). The short motif at 6-16 is the 'HIGH' region element; that stretch reads PTVYDTAHIGN. Zn(2+) is bound by residues cysteine 188, histidine 213, and glutamate 217. Residues 246-250 carry the 'KMSKS' region motif; that stretch reads KMSKS. Lysine 249 provides a ligand contact to ATP.

The protein belongs to the class-I aminoacyl-tRNA synthetase family. Monomer. Zn(2+) is required as a cofactor.

The protein resides in the cytoplasm. The enzyme catalyses tRNA(Cys) + L-cysteine + ATP = L-cysteinyl-tRNA(Cys) + AMP + diphosphate. The sequence is that of Cysteine--tRNA ligase from Wolbachia sp. subsp. Brugia malayi (strain TRS).